Consider the following 121-residue polypeptide: Large ribosomal subunit protein bL20 (121 aa).

The protein belongs to the bacterial ribosomal protein bL20 family.

Binds directly to 23S ribosomal RNA and is necessary for the in vitro assembly process of the 50S ribosomal subunit. It is not involved in the protein synthesizing functions of that subunit. This is Large ribosomal subunit protein bL20 from Ruegeria pomeroyi (strain ATCC 700808 / DSM 15171 / DSS-3) (Silicibacter pomeroyi).